The chain runs to 266 residues: Glutamate racemase (266 aa).

Substrate contacts are provided by residues 9–10 (DS) and 41–42 (YG). Cysteine 72 acts as the Proton donor/acceptor in catalysis. 73–74 (NT) serves as a coordination point for substrate. Cysteine 184 (proton donor/acceptor) is an active-site residue. Substrate is bound at residue 185 to 186 (TH).

This sequence belongs to the aspartate/glutamate racemases family. In terms of assembly, homodimer.

It catalyses the reaction L-glutamate = D-glutamate. It participates in cell wall biogenesis; peptidoglycan biosynthesis. Provides the (R)-glutamate required for cell wall biosynthesis. This Staphylococcus aureus (strain MRSA252) protein is Glutamate racemase.